The chain runs to 322 residues: Sideroflexin-2 (322 aa).

Residue methionine 1 is modified to N-acetylmethionine. 5 consecutive transmembrane segments (helical) span residues methionine 100–valine 122, serine 142–methionine 164, leucine 174–isoleucine 192, valine 228–leucine 250, and proline 265–proline 287.

The protein belongs to the sideroflexin family.

The protein resides in the mitochondrion inner membrane. It localises to the mitochondrion outer membrane. It catalyses the reaction L-serine(in) = L-serine(out). Functionally, mitochondrial amino-acid transporter that mediates transport of serine into mitochondria. Involved in mitochondrial iron homeostasis by regulating heme biosynthesis. This chain is Sideroflexin-2, found in Bos taurus (Bovine).